Here is a 274-residue protein sequence, read N- to C-terminus: Large ribosomal subunit protein uL2c (274 aa).

Disordered regions lie at residues methionine 1–valine 22 and proline 225–glycine 254.

The protein belongs to the universal ribosomal protein uL2 family. As to quaternary structure, part of the 50S ribosomal subunit.

The protein localises to the plastid. It localises to the chloroplast. This chain is Large ribosomal subunit protein uL2c (rpl2), found in Sinapis alba (White mustard).